The primary structure comprises 331 residues: MQDYIERVTGGADLTVEEARDAARAVFEDATEAQIGALLAALRAKGETEAEIAGFAQGMRDAALTIEPDRGPLVDTCGTGGDDYNTINVSTTSALVAAGAGAAVAKHGNYSVSSSSGSADVLEVAGVNVEAEPESVEACIEDNGVGFMLAPVFHPAMKAVIGPRKELGMRTVFNVLGPLTNPAGADAQVLGVYDADLVPVIAESLSHMPVERALVVHGSGMDEIALHDATTVAEIDGDEITEYTLTPADLGLERAPIEAVAGGTPQENADDLEGILTGDVTGPKRDLILANAGAAIYVAGLADSLEGGVEVARDAIDSGAAKAKHDALREA.

Residues glycine 78, 81–82 (GD), threonine 86, 88–91 (NVST), 106–114 (KHGNYSVSS), and serine 118 contribute to the 5-phospho-alpha-D-ribose 1-diphosphate site. Residue glycine 78 coordinates anthranilate. Serine 90 contacts Mg(2+). Asparagine 109 contacts anthranilate. An anthranilate-binding site is contributed by arginine 164. Positions 222 and 223 each coordinate Mg(2+).

This sequence belongs to the anthranilate phosphoribosyltransferase family. As to quaternary structure, homodimer. It depends on Mg(2+) as a cofactor.

The enzyme catalyses N-(5-phospho-beta-D-ribosyl)anthranilate + diphosphate = 5-phospho-alpha-D-ribose 1-diphosphate + anthranilate. It participates in amino-acid biosynthesis; L-tryptophan biosynthesis; L-tryptophan from chorismate: step 2/5. Its function is as follows. Catalyzes the transfer of the phosphoribosyl group of 5-phosphorylribose-1-pyrophosphate (PRPP) to anthranilate to yield N-(5'-phosphoribosyl)-anthranilate (PRA). The protein is Anthranilate phosphoribosyltransferase of Haloferax volcanii (strain ATCC 29605 / DSM 3757 / JCM 8879 / NBRC 14742 / NCIMB 2012 / VKM B-1768 / DS2) (Halobacterium volcanii).